An 86-amino-acid chain; its full sequence is Acyl carrier protein (86 aa).

In terms of domain architecture, Carrier spans 10–85 (DKIEQKVIEM…DVIKYIKERQ (76 aa)). At Ser-45 the chain carries O-(pantetheine 4'-phosphoryl)serine.

The protein belongs to the acyl carrier protein (ACP) family. 4'-phosphopantetheine is transferred from CoA to a specific serine of apo-ACP by AcpS. This modification is essential for activity because fatty acids are bound in thioester linkage to the sulfhydryl of the prosthetic group.

The protein localises to the cytoplasm. It participates in lipid metabolism; fatty acid biosynthesis. In terms of biological role, carrier of the growing fatty acid chain in fatty acid biosynthesis. This chain is Acyl carrier protein, found in Rickettsia prowazekii (strain Madrid E).